The primary structure comprises 324 residues: Olfactory receptor 7G2 (324 aa).

The Extracellular segment spans residues 1 to 25; sequence MEARNQTAISKFLLLGLIEDPELQP. N-linked (GlcNAc...) asparagine glycosylation is present at asparagine 5. The helical transmembrane segment at 26–46 threads the bilayer; the sequence is VLFSLFLSMYLVTILGNLLIL. Over 47–54 the chain is Cytoplasmic; that stretch reads LAVISDSH. A helical transmembrane segment spans residues 55-75; it reads LHTPMYFFLSNLSFLDICLST. Residues 76-99 are Extracellular-facing; it reads TTIPKMLVNIQAQNRSITYSGCLT. An N-linked (GlcNAc...) asparagine glycan is attached at asparagine 89. Cysteine 97 and cysteine 189 are disulfide-bonded. Residues 100-120 traverse the membrane as a helical segment; that stretch reads QICFVLFFAGLENCLLAAMAY. Residues 121–139 are Cytoplasmic-facing; sequence DRYVAICHPLRYTVIMNPR. The helical transmembrane segment at 140-160 threads the bilayer; it reads LCGLLILLSLLTSVVNALLLS. Over 161 to 197 the chain is Extracellular; that stretch reads LMVLRLSFCTDLEIPLFFCELAQVIQLTCSDTLINNI. A helical membrane pass occupies residues 198-217; the sequence is LIYFAACIFGGVPLSGIILS. Over 218–237 the chain is Cytoplasmic; that stretch reads YTQITSCVLRMPSASGKHKA. A helical transmembrane segment spans residues 238–258; sequence VSTCGSHLSIVLLFYGAGLGV. Over 259–271 the chain is Extracellular; it reads YISSVVTDSPRKT. The chain crosses the membrane as a helical span at residues 272-292; sequence AVASVMYSVFPQMVNPFIYSL. Over 293-324 the chain is Cytoplasmic; sequence RNKDMKGTLRKFIGRIPSLLWCAICFGFRFLE.

Belongs to the G-protein coupled receptor 1 family.

The protein localises to the cell membrane. Functionally, odorant receptor. The polypeptide is Olfactory receptor 7G2 (OR7G2) (Homo sapiens (Human)).